We begin with the raw amino-acid sequence, 152 residues long: S-ribosylhomocysteine lyase (152 aa).

Fe cation contacts are provided by H53, H57, and C120.

The protein belongs to the LuxS family. Homodimer. It depends on Fe cation as a cofactor.

It catalyses the reaction S-(5-deoxy-D-ribos-5-yl)-L-homocysteine = (S)-4,5-dihydroxypentane-2,3-dione + L-homocysteine. Its function is as follows. Involved in the synthesis of autoinducer 2 (AI-2) which is secreted by bacteria and is used to communicate both the cell density and the metabolic potential of the environment. The regulation of gene expression in response to changes in cell density is called quorum sensing. Catalyzes the transformation of S-ribosylhomocysteine (RHC) to homocysteine (HC) and 4,5-dihydroxy-2,3-pentadione (DPD). This Enterococcus faecalis (strain ATCC 700802 / V583) protein is S-ribosylhomocysteine lyase.